Consider the following 347-residue polypeptide: Eukaryotic translation initiation factor 3 subunit I (347 aa).

6 WD repeats span residues 8–49 (GHER…GTYE), 50–89 (GHNG…CLFT), 146–186 (TFSG…PESG), 198–237 (AHTD…VIKT), 239–278 (ATET…GRFE), and 295–336 (GHFG…SKLY).

The protein belongs to the eIF-3 subunit I family. In terms of assembly, component of the eukaryotic translation initiation factor 3 (eIF-3) complex.

The protein resides in the cytoplasm. Component of the eukaryotic translation initiation factor 3 (eIF-3) complex, which is involved in protein synthesis of a specialized repertoire of mRNAs and, together with other initiation factors, stimulates binding of mRNA and methionyl-tRNAi to the 40S ribosome. The eIF-3 complex specifically targets and initiates translation of a subset of mRNAs involved in cell proliferation. In Mycosarcoma maydis (Corn smut fungus), this protein is Eukaryotic translation initiation factor 3 subunit I.